Consider the following 103-residue polypeptide: MVKEITDATFEQETSEGLVLTDFWATWCGPCRMVAPVLEEIQEERGEALKIVKMDVDENPETPGSFGVMSIPTLLIKKDGEVVETIIGYRPKEELDEVINKYV.

The region spanning 1–103 (MVKEITDATF…ELDEVINKYV (103 aa)) is the Thioredoxin domain. The cysteines at positions 28 and 31 are disulfide-linked.

The protein belongs to the thioredoxin family.

In terms of biological role, component of the thioredoxin-thioredoxin reductase system. Participates in various redox reactions through the reversible oxidation of its active center dithiol to a disulfide and catalyzes dithiol-disulfide exchange reactions. This is Thioredoxin (trxA) from Listeria innocua serovar 6a (strain ATCC BAA-680 / CLIP 11262).